We begin with the raw amino-acid sequence, 413 residues long: Probable isoleucine--tRNA ligase, mitochondrial (413 aa).

Residues 298–302 carry the 'KMSKS' region motif; the sequence is KMSKS. K301 contributes to the ATP binding site.

It belongs to the class-I aminoacyl-tRNA synthetase family.

The protein localises to the mitochondrion matrix. It carries out the reaction tRNA(Ile) + L-isoleucine + ATP = L-isoleucyl-tRNA(Ile) + AMP + diphosphate. The polypeptide is Probable isoleucine--tRNA ligase, mitochondrial (Ciona intestinalis (Transparent sea squirt)).